An 862-amino-acid polypeptide reads, in one-letter code: Transcription factor E2F7 (862 aa).

2 consecutive DNA-binding regions follow at residues 140-209 (RKQK…CWHG) and 279-364 (RKDK…KWIG). Disordered regions lie at residues 561-592 (PGSDSPTLEETTMSKQERPTKRQLNDKDDAPL), 617-643 (TPEQLQHVSREEEYNTEPVTKHSNVGE), and 788-862 (KADS…SAGN). Residues 564-574 (DSPTLEETTMS) are compositionally biased toward polar residues. The span at 575–590 (KQERPTKRQLNDKDDA) shows a compositional bias: basic and acidic residues. Polar residues-rich tracts occupy residues 633–643 (EPVTKHSNVGE) and 832–851 (DVSSSRKPQRTQTRTSSSAQ).

It belongs to the E2F/DP family. As to quaternary structure, homodimer and heterodimer: mainly forms homodimers and, to a lesser extent, heterodimers with e2f8.

The protein localises to the nucleus. In terms of biological role, atypical E2F transcription factor that participates in various processes such as angiogenesis and polyploidization of specialized cells. Mainly acts as a transcription repressor that binds DNA independently of DP proteins and specifically recognizes the E2 recognition site 5'-TTTC[CG]CGC-3'. Directly represses transcription of classical E2F transcription factors such as e2f1. Acts as a regulator of S-phase by recognizing and binding the E2-related site 5'-TTCCCGCC-3' and mediating repression of G1/S-regulated genes. Acts as a promoter of sprouting angiogenesis, possibly by acting as a transcription activator. This Xenopus tropicalis (Western clawed frog) protein is Transcription factor E2F7 (e2f7).